Reading from the N-terminus, the 275-residue chain is Thiazole synthase (275 aa).

The active-site Schiff-base intermediate with DXP is K108. Residues G169, 196–197, and 218–219 contribute to the 1-deoxy-D-xylulose 5-phosphate site; these read AG and NT.

This sequence belongs to the ThiG family. Homotetramer. Forms heterodimers with either ThiH or ThiS.

It localises to the cytoplasm. It catalyses the reaction [ThiS sulfur-carrier protein]-C-terminal-Gly-aminoethanethioate + 2-iminoacetate + 1-deoxy-D-xylulose 5-phosphate = [ThiS sulfur-carrier protein]-C-terminal Gly-Gly + 2-[(2R,5Z)-2-carboxy-4-methylthiazol-5(2H)-ylidene]ethyl phosphate + 2 H2O + H(+). It functions in the pathway cofactor biosynthesis; thiamine diphosphate biosynthesis. Functionally, catalyzes the rearrangement of 1-deoxy-D-xylulose 5-phosphate (DXP) to produce the thiazole phosphate moiety of thiamine. Sulfur is provided by the thiocarboxylate moiety of the carrier protein ThiS. In vitro, sulfur can be provided by H(2)S. The polypeptide is Thiazole synthase (Ralstonia pickettii (strain 12J)).